The sequence spans 568 residues: Sphingosine-1-phosphate lyase 1 (568 aa).

Topologically, residues 1 to 41 are lumenal; it reads MPSTDLLTLKAFEPYLEILEVYSTKAKNYVNGHCTKYEPWQ. The helical; Signal-anchor for type III membrane protein transmembrane segment at 42-62 threads the bilayer; the sequence is LIAWSVVWTLLIVWGYEFVFQ. The Cytoplasmic segment spans residues 63–568; sequence PESLWSRFKK…SQMNGSPKPH (506 aa). An N6-(pyridoxal phosphate)lysine; alternate modification is found at lysine 353. The residue at position 353 (lysine 353) is an N6-acetyllysine; alternate. 3'-nitrotyrosine is present on residues tyrosine 356 and tyrosine 366. Serine 564 carries the phosphoserine modification.

This sequence belongs to the group II decarboxylase family. Sphingosine-1-phosphate lyase subfamily. In terms of assembly, homodimer. The cofactor is pyridoxal 5'-phosphate.

It is found in the endoplasmic reticulum membrane. The catalysed reaction is sphinganine 1-phosphate = hexadecanal + phosphoethanolamine. It carries out the reaction sphing-4-enine 1-phosphate = (2E)-hexadecenal + phosphoethanolamine. The protein operates within lipid metabolism; sphingolipid metabolism. In terms of biological role, cleaves phosphorylated sphingoid bases (PSBs), such as sphingosine-1-phosphate, into fatty aldehydes and phosphoethanolamine. Elevates stress-induced ceramide production and apoptosis. Required for global lipid homeostasis in liver and cholesterol homeostasis in fibroblasts. Involved in the regulation of pro-inflammatory response and neutrophil trafficking. Modulates neuronal autophagy via phosphoethanolamine production which regulates accumulation of aggregate-prone proteins such as APP. Seems to play a role in establishing neuronal contact sites and axonal maintenance. This is Sphingosine-1-phosphate lyase 1 from Pongo abelii (Sumatran orangutan).